The chain runs to 118 residues: Thioredoxin H5 (118 aa).

Residue Ala-2 is modified to N-acetylalanine. The Thioredoxin domain occupies 2–113 (AGEGEVIACH…INEKLMKHGG (112 aa)). Residues Cys-39 and Cys-42 each act as nucleophile in the active site. The cysteines at positions 39 and 42 are disulfide-linked.

It belongs to the thioredoxin family. Plant H-type subfamily. In terms of assembly, interacts with MDH1.

It localises to the cytoplasm. Thiol-disulfide oxidoreductase involved in response to pathogens and oxidative stresses. Required for the response to victorin, a phytotoxin which induces programmed cell death in sensitive plants. Possesses insulin disulfide bonds reducing activity. The chain is Thioredoxin H5 (TRX5) from Arabidopsis thaliana (Mouse-ear cress).